A 506-amino-acid polypeptide reads, in one-letter code: Mitogen-activated protein kinase 13 (506 aa).

The Protein kinase domain occupies 13–304; the sequence is YQIQEVVGKG…AEEALADPYF (292 aa). ATP is bound by residues 19–27 and Lys42; that span reads VGKGSYGVV. The active-site Proton acceptor is Asp139. A Phosphothreonine modification is found at Thr175. The TXY motif lies at 175–177; that stretch reads TDY. Residue Tyr177 is modified to Phosphotyrosine. The tract at residues 384-421 is disordered; sequence YSRGERSTPLRRQHASLPRERVCSSVDSNNQDSDNEER.

It belongs to the protein kinase superfamily. CMGC Ser/Thr protein kinase family. MAP kinase subfamily. Dually phosphorylated on Thr-175 and Tyr-177, which activates the enzyme.

It catalyses the reaction L-seryl-[protein] + ATP = O-phospho-L-seryl-[protein] + ADP + H(+). The enzyme catalyses L-threonyl-[protein] + ATP = O-phospho-L-threonyl-[protein] + ADP + H(+). Its activity is regulated as follows. Activated by threonine and tyrosine phosphorylation. The sequence is that of Mitogen-activated protein kinase 13 (MPK13) from Oryza sativa subsp. indica (Rice).